Reading from the N-terminus, the 408-residue chain is COP9 signalosome complex subunit 4 (408 aa).

The PCI domain maps to 194–374 (RIQDARRRFL…GIIYFESNTT (181 aa)).

This sequence belongs to the CSN4 family. In terms of assembly, component of the COP9 signalosome (CSN) complex.

It is found in the cytoplasm. The protein localises to the nucleus. Component of the COP9 signalosome (CSN) complex that acts as an regulator of the ubiquitin (Ubl) conjugation pathway by mediating the deneddylation of the cullin subunit of SCF-type E3 ubiquitin-protein ligase complexes. The CSN complex seems to link protein degradation to sexual development. Required for fruit body formation. This Emericella nidulans (strain FGSC A4 / ATCC 38163 / CBS 112.46 / NRRL 194 / M139) (Aspergillus nidulans) protein is COP9 signalosome complex subunit 4 (csnD).